A 437-amino-acid chain; its full sequence is MKNLKTKQFQGLNGSLLLPGDKSISHRSIMVASISRGISRIKNFSNSTDCLSTLNAFLDLGVEIKKYGRDLIVYGSGLDAFKDPKKPLNMGNSGTTTRLLLGLLAGQSFNTCLVGDASLSKRPMYRVTNPITEVGGEFSLTGNGTLPITVIGHPSLKAFDYHLPIASAQVKSALIFSALQADEPSIIFEKEATRNHLEIMLNDFGADIKTNGLCITVMPRPKLSGRTISIPGDISSAAFFMVAASLLPNSCICLKKVGLNPTRIGIISVLKRMNANIEVKKTSNEAEAYGDIIVHSSNLHAVEITSKEIPNVIDELPILTLAASLAKGRTIISGAGELRVKETYRISVVAAELKKLGARIQEKSDGMVIDGCPKLQIPENNLATHGDHRIGMMLAVAALLVDTSKTITLNNPEAIKISYPNFFRDLDYLLNNPDMKG.

3 residues coordinate 3-phosphoshikimate: Lys-22, Ser-23, and Arg-27. Lys-22 is a phosphoenolpyruvate binding site. Phosphoenolpyruvate-binding residues include Gly-94 and Arg-122. Positions 167, 169, 314, and 341 each coordinate 3-phosphoshikimate. Residue Gln-169 participates in phosphoenolpyruvate binding. Asp-314 acts as the Proton acceptor in catalysis. The phosphoenolpyruvate site is built by Arg-345 and Arg-389.

It belongs to the EPSP synthase family. As to quaternary structure, monomer.

It is found in the cytoplasm. The catalysed reaction is 3-phosphoshikimate + phosphoenolpyruvate = 5-O-(1-carboxyvinyl)-3-phosphoshikimate + phosphate. It participates in metabolic intermediate biosynthesis; chorismate biosynthesis; chorismate from D-erythrose 4-phosphate and phosphoenolpyruvate: step 6/7. In terms of biological role, catalyzes the transfer of the enolpyruvyl moiety of phosphoenolpyruvate (PEP) to the 5-hydroxyl of shikimate-3-phosphate (S3P) to produce enolpyruvyl shikimate-3-phosphate and inorganic phosphate. This is 3-phosphoshikimate 1-carboxyvinyltransferase from Oenococcus oeni (strain ATCC BAA-331 / PSU-1).